A 128-amino-acid polypeptide reads, in one-letter code: Large ribosomal subunit protein bL19 (128 aa).

It belongs to the bacterial ribosomal protein bL19 family.

Functionally, this protein is located at the 30S-50S ribosomal subunit interface and may play a role in the structure and function of the aminoacyl-tRNA binding site. This is Large ribosomal subunit protein bL19 from Paracidovorax citrulli (strain AAC00-1) (Acidovorax citrulli).